The primary structure comprises 338 residues: Dihydroorotate dehydrogenase (quinone) (338 aa).

FMN-binding positions include 68-72 and Thr92; that span reads AGMDK. A substrate-binding site is contributed by Lys72. Substrate is bound at residue 117–121; it reads NRMGF. Residues Ser147 and Asn180 each coordinate FMN. Position 180 (Asn180) interacts with substrate. The Nucleophile role is filled by Ser183. Position 185 (Asn185) interacts with substrate. Positions 214 and 242 each coordinate FMN. Substrate is bound at residue 243–244; the sequence is NT. FMN-binding positions include Gly267, Gly296, and 317–318; that span reads YT.

This sequence belongs to the dihydroorotate dehydrogenase family. Type 2 subfamily. As to quaternary structure, monomer. The cofactor is FMN.

It localises to the cell membrane. The enzyme catalyses (S)-dihydroorotate + a quinone = orotate + a quinol. The protein operates within pyrimidine metabolism; UMP biosynthesis via de novo pathway; orotate from (S)-dihydroorotate (quinone route): step 1/1. Catalyzes the conversion of dihydroorotate to orotate with quinone as electron acceptor. The protein is Dihydroorotate dehydrogenase (quinone) of Salinispora arenicola (strain CNS-205).